Reading from the N-terminus, the 469-residue chain is RuvB-like helicase 2 (469 aa).

Position 74-81 (74-81 (GPPSTGKT)) interacts with ATP.

Belongs to the RuvB family. As to quaternary structure, may form heterododecamers with RVB1. Component of the SWR1 chromatin remodeling complex, the INO80 chromatin remodeling complex, and of the R2TP complex.

It is found in the nucleus. The catalysed reaction is ATP + H2O = ADP + phosphate + H(+). DNA helicase which participates in several chromatin remodeling complexes, including the SWR1 and the INO80 complexes. The SWR1 complex mediates the ATP-dependent exchange of histone H2A for the H2A variant HZT1 leading to transcriptional regulation of selected genes by chromatin remodeling. The INO80 complex remodels chromatin by shifting nucleosomes and is involved in DNA repair. Also involved in pre-rRNA processing. This chain is RuvB-like helicase 2 (RVB2), found in Eremothecium gossypii (strain ATCC 10895 / CBS 109.51 / FGSC 9923 / NRRL Y-1056) (Yeast).